Reading from the N-terminus, the 424-residue chain is MHRLQVVLGHLAGRSESSSALQAAPCSAGFPQASASDVVVVHGRRTPIGRAGRGGFKDTTPDELLSAVLTAVLQDVKLKPECLGDISVGNVLQPGAGAAMARIAQFLSGIPETVPLSAVNRQCSSGLQAVANIAGGIRNGSYDIGMACGVESMTLSERGNPGNISSRLLENEKARDCLIPMGITSENVAERFGISRQKQDAFALASQQKAASAQSKGCFRAEIVPVTTTVLDDKGDRKTITVSQDEGVRPSTTMEGLAKLKPAFKDGGSTTAGNSSQVSDGAAAVLLARRSKAEELGLPILGVLRSYAVVGVPPDIMGIGPAYAIPAALQKAGLTVNDIDIFEINEAFASQALYCVEKLGIPAEKVNPLGGAIALGHPLGCTGARQVVTLLNELKRRGRRAYGVVSMCIGTGMGAAAVFEYPGN.

Residues 1–26 constitute a peroxisome transit peptide; it reads MHRLQVVLGHLAGRSESSSALQAAPC. The PTS2-type peroxisomal targeting signal stretch occupies residues 1 to 26; it reads MHRLQVVLGHLAGRSESSSALQAAPC. The active-site Acyl-thioester intermediate is Cys123. 2 positions are modified to N6-acetyllysine: Lys173 and Lys234. CoA is bound by residues Arg249, Thr252, and Ser276. The active-site Proton donor/acceptor is Cys408.

Belongs to the thiolase-like superfamily. Thiolase family. Homodimer. Interacts (via PTS2-type peroxisomal targeting signal region) with PEX7; leading to its translocation into peroxisomes.

It is found in the peroxisome. The catalysed reaction is an acyl-CoA + acetyl-CoA = a 3-oxoacyl-CoA + CoA. The enzyme catalyses 2 acetyl-CoA = acetoacetyl-CoA + CoA. It carries out the reaction hexanoyl-CoA + acetyl-CoA = 3-oxooctanoyl-CoA + CoA. It catalyses the reaction tetradecanoyl-CoA + acetyl-CoA = 3-oxohexadecanoyl-CoA + CoA. The catalysed reaction is 3-oxohexadecanedioyl-CoA + CoA = tetradecanedioyl-CoA + acetyl-CoA. The enzyme catalyses 3-oxo-(6Z,9Z,12Z,15Z,18Z,21Z)-tetracosahexaenoyl-CoA + CoA = (4Z,7Z,10Z,13Z,16Z,19Z)-docosahexaenoyl-CoA + acetyl-CoA. Its pathway is lipid metabolism; peroxisomal fatty acid beta-oxidation. Responsible for the thiolytic cleavage of straight chain 3-keto fatty acyl-CoAs (3-oxoacyl-CoAs). Plays an important role in fatty acid peroxisomal beta-oxidation. Catalyzes the cleavage of short, medium, long, and very long straight chain 3-oxoacyl-CoAs. Medium chain straight 3-oxoacyl-CoAs are preferred substrates. This Rattus norvegicus (Rat) protein is 3-ketoacyl-CoA thiolase B, peroxisomal.